An 855-amino-acid chain; its full sequence is Inactive rhomboid protein 1 (855 aa).

The tract at residues M1–P35 is disordered. At M1–T411 the chain is on the cytoplasmic side. The segment covering P25–P35 has biased composition (low complexity). Phosphoserine is present on residues S76 and S176. Phosphothreonine is present on residues T180 and T183. At S390 the chain carries Phosphoserine. A helical membrane pass occupies residues F412 to F432. Residues S433–R655 are Lumenal-facing. N583 is a glycosylation site (N-linked (GlcNAc...) asparagine). A helical membrane pass occupies residues L656–Q676. Residues M677 to R691 are Cytoplasmic-facing. The helical transmembrane segment at I692–P712 threads the bilayer. The Lumenal portion of the chain corresponds to Y713–R714. A helical transmembrane segment spans residues A715 to F735. Over Q736–R746 the chain is Cytoplasmic. Residues A747–I767 form a helical membrane-spanning segment. Residues D768–H772 lie on the Lumenal side of the membrane. Residues I773 to G793 traverse the membrane as a helical segment. Residues K794–Q803 lie on the Cytoplasmic side of the membrane. Residues I804–V824 traverse the membrane as a helical segment. Residues Y825 to H855 are Lumenal-facing.

The protein belongs to the peptidase S54 family. As to quaternary structure, homodimer, or homooligomer. Interacts with TGFA and HBEGF. Interacts with EGF; may retain EGF in the endoplasmic reticulum and regulates its degradation through the endoplasmic reticulum-associated degradation (ERAD). Interacts (via cytoplasmic N-terminus) with FRMD8/iTAP; this interaction leads to mutual protein stabilization. Interacts with ADAM17/TACE.

It localises to the endoplasmic reticulum membrane. It is found in the golgi apparatus membrane. Functionally, regulates ADAM17 protease, a sheddase of the epidermal growth factor (EGF) receptor ligands and TNF, thereby plays a role in sleep, cell survival, proliferation, migration and inflammation. Does not exhibit any protease activity on its own. The chain is Inactive rhomboid protein 1 (RHBDF1) from Callithrix jacchus (White-tufted-ear marmoset).